Reading from the N-terminus, the 143-residue chain is Histone H2B.2, sperm (143 aa).

Residues 1–49 (MPKSPSKSSPRKGSPRKGSPRKGSPKRGGKGAKRAGKGGRRNVVKRRRR) are disordered. 5 short sequence motifs (SPKK motif) span residues 4–7 (SPSK), 9–12 (SPRK), 14–17 (SPRK), 19–22 (SPRK), and 24–27 (SPKR). Residues 9-49 (SPRKGSPRKGSPRKGSPKRGGKGAKRAGKGGRRNVVKRRRR) are compositionally biased toward basic residues. Ser14, Ser19, and Ser24 each carry phosphoserine. The O-linked (GlcNAc) serine glycan is linked to Ser129. Lys137 is covalently cross-linked (Glycyl lysine isopeptide (Lys-Gly) (interchain with G-Cter in ubiquitin)).

Belongs to the histone H2B family. The nucleosome is a histone octamer containing two molecules each of H2A, H2B, H3 and H4 assembled in one H3-H4 heterotetramer and two H2A-H2B heterodimers. The octamer wraps approximately 147 bp of DNA. Monoubiquitination of Lys-137 gives a specific tag for epigenetic transcriptional activation and is also prerequisite for histone H3 'Lys-4' and 'Lys-79' methylation. Post-translationally, phosphorylated on SPKK motifs 3, 4 and 5; which may regulate DNA binding. Dephosphorylated during maturation of spermatids to mature sperm and rephosphorylated at fertilization. In terms of processing, glcNAcylation at Ser-129 promotes monoubiquitination of Lys-137. It fluctuates in response to extracellular glucose, and associates with transcribed genes.

It is found in the nucleus. It localises to the chromosome. Core component of nucleosome. Nucleosomes wrap and compact DNA into chromatin, limiting DNA accessibility to the cellular machineries which require DNA as a template. Histones thereby play a central role in transcription regulation, DNA repair, DNA replication and chromosomal stability. DNA accessibility is regulated via a complex set of post-translational modifications of histones, also called histone code, and nucleosome remodeling. In Psammechinus miliaris (Green sea urchin), this protein is Histone H2B.2, sperm.